The primary structure comprises 400 residues: Large envelope protein (400 aa).

At methionine 1 the chain carries N-acetylmethionine. The N-myristoyl glycine; by host moiety is linked to residue glycine 2. Residues 2 to 119 are pre-S1; sequence GGWSSKHRKG…PPLRDTHPQA (118 aa). The segment at 2–174 is pre-S; sequence GGWSSKHRKG…FTKTGDPASN (173 aa). Residues 2–181 lie on the Virion surface; in external conformation side of the membrane; that stretch reads GGWSSKHRKG…ASNMESTTSG (180 aa). Residues 2 to 253 are Intravirion; in internal conformation-facing; the sequence is GGWSSKHRKG…PGYRWMCLRR (252 aa). An N-linked (GlcNAc...) asparagine glycan is attached at tryptophan 4. Residues 89-117 are disordered; sequence PAAPPPASTNRQSGRQPTPISPPLRDTHP. Positions 96 to 106 are enriched in polar residues; it reads STNRQSGRQPT. A pre-S2 region spans residues 120–174; it reads MQWNSTAFHQALQDPRVRGLYFPAGGSSSGTVNPVPNTVSHISSIFTKTGDPASN. Residues 182 to 202 traverse the membrane as a helical segment; that stretch reads FLGPLLVLQAGFFLLTRILTI. Residues 203 to 253 lie on the Intravirion; in external conformation side of the membrane; that stretch reads PQSLDSWWTSLNFLGGAPGCIGQNSQSQTSNHSPTSCPPTCPGYRWMCLRR. Residues 254–274 form a helical membrane-spanning segment; it reads FIIFLFILLLCLIFLLVLLDY. Residues 275–348 lie on the Virion surface side of the membrane; sequence QGMLPVCPLL…WASVRFSWLS (74 aa). Asparagine 320 carries N-linked (GlcNAc...) asparagine; by host glycosylation. The chain crosses the membrane as a helical span at residues 349–369; that stretch reads LLVPFVQWFAGLSPTVWLSVI. Topologically, residues 370-375 are intravirion; it reads WMIWYW. Residues 376–398 traverse the membrane as a helical segment; sequence GPSLYNILSPFLPLLPIFLCLWV. At 399–400 the chain is on the virion surface side; that stretch reads YI.

Belongs to the orthohepadnavirus major surface antigen family. As to quaternary structure, in its internal form (Li-HBsAg), interacts with the capsid protein and with the isoform S. Interacts with host chaperone CANX. In terms of assembly, associates with host chaperone CANX through its pre-S2 N glycan; this association may be essential for isoform M proper secretion. Interacts with isoform L. Interacts with the antigens of satellite virus HDV (HDVAgs); this interaction is required for encapsidation of HDV genomic RNA. Isoform M is N-terminally acetylated by host at a ratio of 90%, and N-glycosylated by host at the pre-S2 region. Post-translationally, myristoylated.

The protein resides in the virion membrane. The large envelope protein exists in two topological conformations, one which is termed 'external' or Le-HBsAg and the other 'internal' or Li-HBsAg. In its external conformation the protein attaches the virus to cell receptors and thereby initiating infection. This interaction determines the species specificity and liver tropism. This attachment induces virion internalization predominantly through caveolin-mediated endocytosis. The large envelope protein also assures fusion between virion membrane and endosomal membrane. In its internal conformation the protein plays a role in virion morphogenesis and mediates the contact with the nucleocapsid like a matrix protein. Its function is as follows. The middle envelope protein plays an important role in the budding of the virion. It is involved in the induction of budding in a nucleocapsid independent way. In this process the majority of envelope proteins bud to form subviral lipoprotein particles of 22 nm of diameter that do not contain a nucleocapsid. The polypeptide is Large envelope protein (Homo sapiens (Human)).